Reading from the N-terminus, the 65-residue chain is Large ribosomal subunit protein bL28 (65 aa).

The protein belongs to the bacterial ribosomal protein bL28 family.

In Lachnoclostridium phytofermentans (strain ATCC 700394 / DSM 18823 / ISDg) (Clostridium phytofermentans), this protein is Large ribosomal subunit protein bL28.